Consider the following 467-residue polypeptide: tRNA-2-methylthio-N(6)-dimethylallyladenosine synthase (467 aa).

A disordered region spans residues 1–20; that stretch reads MSDDTTQIEPAMAQETSPRA. Residues 23-143 enclose the MTTase N-terminal domain; it reads RKVFVKTYGC…LPNALARVRG (121 aa). [4Fe-4S] cluster-binding residues include cysteine 32, cysteine 68, cysteine 106, cysteine 184, cysteine 188, and cysteine 191. The Radical SAM core domain occupies 170–402; the sequence is RKRGVSAFLT…QALLSAQQYA (233 aa). The TRAM domain occupies 405 to 467; the sequence is DSMIGRKMDV…TNSLIAQKLA (63 aa).

Belongs to the methylthiotransferase family. MiaB subfamily. As to quaternary structure, monomer. The cofactor is [4Fe-4S] cluster.

The protein localises to the cytoplasm. The catalysed reaction is N(6)-dimethylallyladenosine(37) in tRNA + (sulfur carrier)-SH + AH2 + 2 S-adenosyl-L-methionine = 2-methylsulfanyl-N(6)-dimethylallyladenosine(37) in tRNA + (sulfur carrier)-H + 5'-deoxyadenosine + L-methionine + A + S-adenosyl-L-homocysteine + 2 H(+). Its function is as follows. Catalyzes the methylthiolation of N6-(dimethylallyl)adenosine (i(6)A), leading to the formation of 2-methylthio-N6-(dimethylallyl)adenosine (ms(2)i(6)A) at position 37 in tRNAs that read codons beginning with uridine. This chain is tRNA-2-methylthio-N(6)-dimethylallyladenosine synthase, found in Brucella canis (strain ATCC 23365 / NCTC 10854 / RM-666).